Consider the following 120-residue polypeptide: Large ribosomal subunit protein uL18 (120 aa).

This sequence belongs to the universal ribosomal protein uL18 family. As to quaternary structure, part of the 50S ribosomal subunit; part of the 5S rRNA/L5/L18/L25 subcomplex. Contacts the 5S and 23S rRNAs.

Its function is as follows. This is one of the proteins that bind and probably mediate the attachment of the 5S RNA into the large ribosomal subunit, where it forms part of the central protuberance. This Gluconobacter oxydans (strain 621H) (Gluconobacter suboxydans) protein is Large ribosomal subunit protein uL18.